The chain runs to 338 residues: Glycerol-3-phosphate dehydrogenase [NAD(P)+] (338 aa).

NADPH contacts are provided by Ser-15, Tyr-16, His-36, and Lys-110. Residues Lys-110, Gly-139, and Thr-141 each coordinate sn-glycerol 3-phosphate. Ala-143 is an NADPH binding site. Sn-glycerol 3-phosphate contacts are provided by Lys-195, Asp-248, Ser-258, Arg-259, and Asn-260. Lys-195 acts as the Proton acceptor in catalysis. Arg-259 contributes to the NADPH binding site. NADPH contacts are provided by Val-283 and Glu-285.

The protein belongs to the NAD-dependent glycerol-3-phosphate dehydrogenase family.

The protein resides in the cytoplasm. It carries out the reaction sn-glycerol 3-phosphate + NAD(+) = dihydroxyacetone phosphate + NADH + H(+). It catalyses the reaction sn-glycerol 3-phosphate + NADP(+) = dihydroxyacetone phosphate + NADPH + H(+). It functions in the pathway membrane lipid metabolism; glycerophospholipid metabolism. Its function is as follows. Catalyzes the reduction of the glycolytic intermediate dihydroxyacetone phosphate (DHAP) to sn-glycerol 3-phosphate (G3P), the key precursor for phospholipid synthesis. This Edwardsiella ictaluri (strain 93-146) protein is Glycerol-3-phosphate dehydrogenase [NAD(P)+].